The following is a 325-amino-acid chain: 6-hydroxymellein 5-farnesyltransferase cdmH (325 aa).

A run of 5 helical transmembrane segments spans residues 60–80, 113–133, 138–158, 169–189, and 192–212; these read ASIL…GAAG, AFTW…AMLG, WPFM…KRPI, LLGI…YGPC, and ISEI…WSFY. N-linked (GlcNAc...) asparagine glycosylation is present at Asn-214. The next 3 membrane-spanning stretches (helical) occupy residues 243 to 263, 267 to 287, and 295 to 315; these read ALLA…LRPF, WLWL…LLSF, and GGVL…ACTL.

This sequence belongs to the UbiA prenyltransferase family. It depends on Mg(2+) as a cofactor.

It localises to the membrane. The enzyme catalyses 6-hydroxymellein + (2E,6E)-farnesyl diphosphate = verruculide C + diphosphate. The protein operates within secondary metabolite biosynthesis; terpenoid biosynthesis. 6-hydroxymellein 5-farnesyltransferase; part of the gene cluster that mediates the biosynthesis of chrodrimanin B, a meroterpenoid that acts as a potent blocker of insect GABA-gated chloride channels. The first step of the pathway is the biosynthesis of 6-hydroxymellein by the polyketide synthase cdmE. The prenyltransferase cdmH acts as a 6-hydroxymellein 5-farnesyltransferase and produces the hydrophobic metabolite verruculide C. The FAD-dependent monooxygenase cdmI further converts verruculide C into verruculide B. The terpene cyclase cdmG then produced the pentacyclic molecule 3-hydroxypentacecilide A, the backbone structure of chrodrimanin B, via folding the farnesyl moiety of the substrate into the chair-boat conformation. The short-chain dehydrogenase/reductase cdmF functions as the 3-OH dehydrogenase that oxidizes the C-3 hydroxyl group of 3-hydroxypentacecilide A and produces chrodrimanin C, the dehydrogenated product of 3-hydroxypentacecilide A. The cytochrome P450 monooxygenase cdmJ then accepts both 3-hydroxypentacecilide A and chrodrimanin C and functions as a C-7-beta-hydroxylase to produce respectively chrodrimanin H and chrodrimanin F. The dioxygenase cdmA accepts chrodrimanin H to afford chrodrimanin E, which is further transformed to chrodrimanin A by the dioxygenase cdmD. CdmA can also accept chrodrimanin C as substrate to convert it into verruculide A, which is further converted into chrodrimanin T by cdmD. The last step of the biosynthesis is proposed to be performed by the acetyltransferase cdmC which acetylates chrodrimanin A to yield chrodrimanin B. The pathway may also lead to the production of additional shunt products, including chrodrimanins T and U. The chain is 6-hydroxymellein 5-farnesyltransferase cdmH from Talaromyces verruculosus (Penicillium verruculosum).